A 148-amino-acid polypeptide reads, in one-letter code: Large ribosomal subunit protein bL9 (148 aa).

The protein belongs to the bacterial ribosomal protein bL9 family.

In terms of biological role, binds to the 23S rRNA. The protein is Large ribosomal subunit protein bL9 of Hahella chejuensis (strain KCTC 2396).